The chain runs to 276 residues: Rhomboid protease GlpG (276 aa).

The next 6 helical transmembrane spans lie at 94–114, 142–162, 169–189, 192–212, 229–249, and 250–270; these read GPVT…MSLI, IFMH…WYLG, LGSG…GYVQ, FSGP…GYVW, LIIF…GMSM, and ANGA…VDTL. The Nucleophile role is filled by Ser-201. The active site involves His-254.

Belongs to the peptidase S54 family.

It localises to the cell inner membrane. The enzyme catalyses Cleaves type-1 transmembrane domains using a catalytic dyad composed of serine and histidine that are contributed by different transmembrane domains.. In terms of biological role, rhomboid-type serine protease that catalyzes intramembrane proteolysis. This chain is Rhomboid protease GlpG, found in Salmonella paratyphi A (strain ATCC 9150 / SARB42).